Here is a 162-residue protein sequence, read N- to C-terminus: MVDPARARKLAKRIGTIVATAIDHEIKDPRLAFVTVTDTKVTADLHDATVYYTVMGADLESEPDLAAAAAGLEKAKGVLRSKVGAGTGVRFTPTLTFVADTVPDTARHMEELLARARAADDEVARVAAGASPAGDPDPYKEPRAEDADDAEVDEPSGSRQAD.

The tract at residues 121-162 (DEVARVAAGASPAGDPDPYKEPRAEDADDAEVDEPSGSRQAD) is disordered. Over residues 125–136 (RVAAGASPAGDP) the composition is skewed to low complexity.

Belongs to the RbfA family. Monomer. Binds 30S ribosomal subunits, but not 50S ribosomal subunits or 70S ribosomes.

The protein resides in the cytoplasm. One of several proteins that assist in the late maturation steps of the functional core of the 30S ribosomal subunit. Associates with free 30S ribosomal subunits (but not with 30S subunits that are part of 70S ribosomes or polysomes). Required for efficient processing of 16S rRNA. May interact with the 5'-terminal helix region of 16S rRNA. This Rhodococcus jostii (strain RHA1) protein is Ribosome-binding factor A.